Consider the following 658-residue polypeptide: Threonine--tRNA ligase (658 aa).

The region spanning 1 to 61 is the TGS domain; that stretch reads MSDVRVIIQR…KDGEEVEPVQ (61 aa). Residues 259–554 form a catalytic region; sequence DHRKLGNELD…LLEHYAGAFP (296 aa). Zn(2+)-binding residues include Cys353, His404, and His531.

This sequence belongs to the class-II aminoacyl-tRNA synthetase family. As to quaternary structure, homodimer. Zn(2+) serves as cofactor.

The protein localises to the cytoplasm. It carries out the reaction tRNA(Thr) + L-threonine + ATP = L-threonyl-tRNA(Thr) + AMP + diphosphate + H(+). Catalyzes the attachment of threonine to tRNA(Thr) in a two-step reaction: L-threonine is first activated by ATP to form Thr-AMP and then transferred to the acceptor end of tRNA(Thr). Also edits incorrectly charged L-seryl-tRNA(Thr). This Streptomyces avermitilis (strain ATCC 31267 / DSM 46492 / JCM 5070 / NBRC 14893 / NCIMB 12804 / NRRL 8165 / MA-4680) protein is Threonine--tRNA ligase.